Here is a 1257-residue protein sequence, read N- to C-terminus: Neurocan core protein (1257 aa).

The first 22 residues, 1-22, serve as a signal peptide directing secretion; that stretch reads MGAESVWASGLLVLWLLLLVSG. The region spanning 37 to 157 is the Ig-like V-type domain; it reads HMLKSGSGPI…EQDLVTLEVT (121 aa). 5 disulfides stabilise this stretch: Cys-58–Cys-139, Cys-181–Cys-252, Cys-205–Cys-226, Cys-279–Cys-354, and Cys-303–Cys-324. An N-linked (GlcNAc...) asparagine glycan is attached at Asn-121. 2 Link domains span residues 159–254 and 258–356; these read VVFH…YCFA and GGEV…YCFR. Residue Asn-339 is glycosylated (N-linked (GlcNAc...) asparagine). Residues 361–391 form a disordered region; the sequence is TPQRGDSEIPSSGDEGEIVSAEGPPAPELKP. 2 O-linked (Xyl...) (chondroitin sulfate) serine glycosylation sites follow: Ser-380 and Ser-410. The span at 447–459 shows a compositional bias: low complexity; sequence SSTGVPSPSSLGV. Disordered stretches follow at residues 447–493, 550–610, and 683–707; these read SSTG…FQQQ, GSLG…AVPS, and GAEDPETPFQTTMAAPGEASHGSPE. The segment covering 464-473 has biased composition (polar residues); it reads TTPSGTQVAP. The segment covering 569-580 has biased composition (low complexity); sequence SPSTVPSTDSTP. Asn-737 is a glycosylation site (N-linked (GlcNAc...) asparagine). A glycan (O-linked (Xyl...) (chondroitin sulfate) serine) is linked at Ser-944. An EGF-like 1 domain is found at 949–985; that stretch reads PTDPCENNPCLHGGTCRTNGTMYGCSCDQGYAGENCE. Intrachain disulfides connect Cys-953–Cys-964, Cys-958–Cys-973, Cys-975–Cys-984, Cys-991–Cys-1002, Cys-996–Cys-1011, Cys-1013–Cys-1022, Cys-1029–Cys-1040, Cys-1057–Cys-1149, Cys-1125–Cys-1141, Cys-1156–Cys-1199, and Cys-1185–Cys-1212. The N-linked (GlcNAc...) asparagine glycan is linked to Asn-967. Residues 987–1023 enclose the EGF-like 2; calcium-binding domain; it reads DIDDCLCSPCENGGTCIDEVNGFICLCLPSYGGNLCE. Residues 1025-1154 form the C-type lectin domain; it reads DTEGCDRGWH…LPYVCKKGTV (130 aa). The Sushi domain occupies 1154 to 1214; that stretch reads VLCGPPPAVE…WDRPQIVCTK (61 aa). Asn-1164 carries N-linked (GlcNAc...) asparagine glycosylation. The segment covering 1215-1244 has biased composition (basic residues); that stretch reads PRRSHRMRRHHHHPHRHHKPRKEHRKHKRH. Residues 1215-1257 are disordered; sequence PRRSHRMRRHHHHPHRHHKPRKEHRKHKRHPAEDWEKDEGDFC.

It belongs to the aggrecan/versican proteoglycan family. Two isoforms were found that probably arise by proteolytic processing. The large isoform is predominant in early postnatal brain, the small isoform is found in adult brain. Post-translationally, O-glycosylated; contains chondroitin sulfate. As to expression, early postnatal and adult brain; not expressed in kidney, lung, liver and muscle.

It localises to the secreted. May modulate neuronal adhesion and neurite growth during development by binding to neural cell adhesion molecules (NG-CAM and N-CAM). Chondroitin sulfate proteoglycan; binds to hyaluronic acid. The protein is Neurocan core protein (Ncan) of Rattus norvegicus (Rat).